A 380-amino-acid chain; its full sequence is L-prolyl-[peptidyl-carrier protein] dehydrogenase (380 aa).

Catalysis depends on Glu-243, which acts as the Proton acceptor. FAD is bound by residues Arg-269 and Gln-280.

This sequence belongs to the acyl-CoA dehydrogenase family. FAD is required as a cofactor.

The enzyme catalyses L-prolyl-[peptidyl-carrier protein] + 2 oxidized [electron-transfer flavoprotein] + H(+) = (1H-pyrrole-2-carbonyl)-[peptidyl-carrier protein] + 2 reduced [electron-transfer flavoprotein]. In terms of biological role, involved in the biosynthesis of pyoluteorin. Catalyzes the desaturation of the L-prolyl-[PltL] to yield 1H-pyrrole-2-carbonyl-[PltL]. This Pseudomonas fluorescens (strain ATCC BAA-477 / NRRL B-23932 / Pf-5) protein is L-prolyl-[peptidyl-carrier protein] dehydrogenase.